We begin with the raw amino-acid sequence, 183 residues long: TATA box-binding protein-like 1 (183 aa).

This sequence belongs to the TBP family. As to quaternary structure, binds TFIIA and TFIIB. Present in the brain, heart, liver and gizzard.

It is found in the cytoplasm. Its subcellular location is the nucleus. Part of a specialized transcription system that mediates the transcription of most ribosomal proteins through the 5'-TCT-3' motif which is a core promoter element at these genes. Seems to also mediate the transcription of NF1. Does not bind the TATA box. This chain is TATA box-binding protein-like 1 (TBPL1), found in Gallus gallus (Chicken).